The primary structure comprises 255 residues: 1-acyl-sn-glycerol-3-phosphate acyltransferase (255 aa).

The short motif at 78–83 is the HXXXXD motif element; that stretch reads HVSWLD.

It belongs to the 1-acyl-sn-glycerol-3-phosphate acyltransferase family.

The protein resides in the cell inner membrane. It carries out the reaction a 1-acyl-sn-glycero-3-phosphate + an acyl-CoA = a 1,2-diacyl-sn-glycero-3-phosphate + CoA. It functions in the pathway phospholipid metabolism; CDP-diacylglycerol biosynthesis; CDP-diacylglycerol from sn-glycerol 3-phosphate: step 2/3. Converts lysophosphatidic acid (LPA) into phosphatidic acid by incorporating acyl moiety at the 2 position. This is 1-acyl-sn-glycerol-3-phosphate acyltransferase (plsC) from Neisseria meningitidis serogroup B (strain ATCC BAA-335 / MC58).